Consider the following 959-residue polypeptide: UPF0182 protein MAE_41360 (959 aa).

Helical transmembrane passes span 13-33 (PILL…VVAN), 50-70 (LSWQ…FIFT), 99-119 (LLGL…MLLY), 156-176 (DISS…GLLI), 184-204 (IISI…WANF), 239-259 (LWLT…YLFS), 276-296 (LRHL…HHII), 319-339 (VGQF…IWLG), and 362-382 (FFPY…GTII).

Belongs to the UPF0182 family.

The protein localises to the cell membrane. The polypeptide is UPF0182 protein MAE_41360 (Microcystis aeruginosa (strain NIES-843 / IAM M-2473)).